Here is a 559-residue protein sequence, read N- to C-terminus: O-fucosyltransferase 37 (559 aa).

The chain crosses the membrane as a helical; Signal-anchor for type II membrane protein span at residues 53–73 (FFLLLISLSLVFSGISFLTFS). N-linked (GlcNAc...) asparagine glycosylation is present at Asn-126. 331–333 (HLR) contacts substrate. Residues Asn-372, Asn-403, Asn-447, and Asn-504 are each glycosylated (N-linked (GlcNAc...) asparagine).

This sequence belongs to the glycosyltransferase GT106 family.

The protein localises to the membrane. Its pathway is glycan metabolism. This chain is O-fucosyltransferase 37, found in Arabidopsis thaliana (Mouse-ear cress).